Reading from the N-terminus, the 481-residue chain is GDP-fucose protein O-fucosyltransferase 2 (481 aa).

A signal peptide spans 1-22 (MKGRAHIWVALLLACLPPRFRN). Residues 59-63 (GEGFN), 287-289 (HLR), Asp-365, and 382-383 (RF) contribute to the GDP-beta-L-fucose site. Catalysis depends on Glu-60, which acts as the Proton acceptor.

This sequence belongs to the glycosyltransferase 68 family.

It is found in the endoplasmic reticulum. It catalyses the reaction L-seryl-[protein] + GDP-beta-L-fucose = 3-O-(alpha-L-fucosyl)-L-seryl-[protein] + GDP + H(+). The enzyme catalyses L-threonyl-[protein] + GDP-beta-L-fucose = 3-O-(alpha-L-fucosyl)-L-threonyl-[protein] + GDP + H(+). It participates in protein modification; protein glycosylation. Functionally, catalyzes the reaction that attaches fucose through an O-glycosidic linkage to a conserved serine or threonine residue in the consensus sequence C1-X-X-S/T-C2 of thrombospondin type I repeats (TSRs) where C1 and C2 are the first and second cysteines of the repeat, respectively. O-fucosylates sporozoite proteins CSP and TRAP. O-fucosylation regulates stability and intracellular trafficking of TRAP but not of CSP. Probably by regulating protein O-fucosylation, may play a role in parasite transmission to the mosquito vector and/or infection of the vertebrate host hepatocytes; however, POFUT2 involvement in transmission/infection is controversial. The protein is GDP-fucose protein O-fucosyltransferase 2 of Plasmodium vivax (strain Salvador I).